The following is a 147-amino-acid chain: Phosphoribosyl-AMP cyclohydrolase (147 aa).

A Mg(2+)-binding site is contributed by Asp-89. Cys-90 provides a ligand contact to Zn(2+). Mg(2+) contacts are provided by Asp-91 and Asp-93. The Zn(2+) site is built by Cys-106 and Cys-113.

Belongs to the PRA-CH family. As to quaternary structure, homodimer. Mg(2+) serves as cofactor. Requires Zn(2+) as cofactor.

The protein localises to the cytoplasm. The catalysed reaction is 1-(5-phospho-beta-D-ribosyl)-5'-AMP + H2O = 1-(5-phospho-beta-D-ribosyl)-5-[(5-phospho-beta-D-ribosylamino)methylideneamino]imidazole-4-carboxamide. The protein operates within amino-acid biosynthesis; L-histidine biosynthesis; L-histidine from 5-phospho-alpha-D-ribose 1-diphosphate: step 3/9. Its function is as follows. Catalyzes the hydrolysis of the adenine ring of phosphoribosyl-AMP. This chain is Phosphoribosyl-AMP cyclohydrolase, found in Nitrobacter hamburgensis (strain DSM 10229 / NCIMB 13809 / X14).